Consider the following 280-residue polypeptide: Putative transcription factor kapC (280 aa).

The disordered stretch occupies residues 1–102; that stretch reads MQPALAPHPS…GKRPLSTSKR (102 aa). Positions 39–49 are enriched in pro residues; that stretch reads PQPPAPQPPHM. The span at 79-89 shows a compositional bias: polar residues; the sequence is TQPDVTGQETP. The region spanning 96-159 is the bZIP domain; it reads PLSTSKRAAQ…EYIINLQSRL (64 aa). The interval 97-120 is basic motif; the sequence is LSTSKRAAQNRAAQRAFRQRKEAH. The tract at residues 124 to 155 is leucine-zipper; that stretch reads LEGKVKAYESMGEAIKALQAENYQLREYIINL. Positions 169 to 280 are disordered; that stretch reads LPGNIDLSQP…EQTHGLPLIS (112 aa). Positions 197–206 are enriched in pro residues; it reads APPPTAPQQP.

It belongs to the bZIP family.

The protein localises to the nucleus. Functionally, putative transcription factor. In Aspergillus fumigatus (strain ATCC MYA-4609 / CBS 101355 / FGSC A1100 / Af293) (Neosartorya fumigata), this protein is Putative transcription factor kapC (kapC).